Consider the following 375-residue polypeptide: D-aspartate oxidase (375 aa).

The first 17 residues, Met-1–Ala-17, serve as a signal peptide directing secretion. Ser-9, Leu-12, Asp-34, Ser-51, and Gly-55 together coordinate FAD. Asn-203 is a glycosylation site (N-linked (GlcNAc...) asparagine). Residues Arg-322, Gly-354, and Tyr-355 each contribute to the FAD site.

Belongs to the DAMOX/DASOX family. FAD is required as a cofactor.

The enzyme catalyses D-aspartate + O2 + H2O = oxaloacetate + H2O2 + NH4(+). It catalyses the reaction D-glutamate + O2 + H2O = H2O2 + 2-oxoglutarate + NH4(+). Selectively catalyzes the oxidative deamination of acidic amino acids. Protects the organism from the toxicity of D-amino acids. Enables the organism to utilize D-amino acids as a source of nutrients. Enables the organism to utilize D-aspartate as a nitrogen source. The sequence is that of D-aspartate oxidase (DDO) from Komagataella phaffii (strain GS115 / ATCC 20864) (Yeast).